Consider the following 440-residue polypeptide: GTPase Der (440 aa).

EngA-type G domains lie at 3–167 and 176–351; these read PIIA…PYDR and TRIA…EQYC. GTP is bound by residues 9-16, 56-60, 119-122, 182-189, 229-233, and 294-297; these read GRPNVGKS, DTGGF, NKVD, DTAGI, and NKWD. In terms of domain architecture, KH-like spans 352–436; it reads KRVTTGELNR…PLKLIFRGRD (85 aa).

It belongs to the TRAFAC class TrmE-Era-EngA-EngB-Septin-like GTPase superfamily. EngA (Der) GTPase family. As to quaternary structure, associates with the 50S ribosomal subunit.

GTPase that plays an essential role in the late steps of ribosome biogenesis. This chain is GTPase Der, found in Citrifermentans bemidjiense (strain ATCC BAA-1014 / DSM 16622 / JCM 12645 / Bem) (Geobacter bemidjiensis).